The sequence spans 179 residues: ATP synthase subunit b (179 aa).

A helical transmembrane segment spans residues isoleucine 13–tyrosine 33.

The protein belongs to the ATPase B chain family. F-type ATPases have 2 components, F(1) - the catalytic core - and F(0) - the membrane proton channel. F(1) has five subunits: alpha(3), beta(3), gamma(1), delta(1), epsilon(1). F(0) has three main subunits: a(1), b(2) and c(10-14). The alpha and beta chains form an alternating ring which encloses part of the gamma chain. F(1) is attached to F(0) by a central stalk formed by the gamma and epsilon chains, while a peripheral stalk is formed by the delta and b chains.

Its subcellular location is the cell membrane. Its function is as follows. F(1)F(0) ATP synthase produces ATP from ADP in the presence of a proton or sodium gradient. F-type ATPases consist of two structural domains, F(1) containing the extramembraneous catalytic core and F(0) containing the membrane proton channel, linked together by a central stalk and a peripheral stalk. During catalysis, ATP synthesis in the catalytic domain of F(1) is coupled via a rotary mechanism of the central stalk subunits to proton translocation. In terms of biological role, component of the F(0) channel, it forms part of the peripheral stalk, linking F(1) to F(0). This chain is ATP synthase subunit b, found in Thermobifida fusca (strain YX).